We begin with the raw amino-acid sequence, 172 residues long: Small ribosomal subunit protein uS5 (172 aa).

The region spanning 17–80 (LREKMISVNR…EQARRNMFKV (64 aa)) is the S5 DRBM domain.

It belongs to the universal ribosomal protein uS5 family. Part of the 30S ribosomal subunit. Contacts proteins S4 and S8.

With S4 and S12 plays an important role in translational accuracy. Functionally, located at the back of the 30S subunit body where it stabilizes the conformation of the head with respect to the body. The sequence is that of Small ribosomal subunit protein uS5 from Burkholderia lata (strain ATCC 17760 / DSM 23089 / LMG 22485 / NCIMB 9086 / R18194 / 383).